The following is a 275-amino-acid chain: Elongation factor Ts (275 aa).

The interval 76–79 (TDFV) is involved in Mg(2+) ion dislocation from EF-Tu.

Belongs to the EF-Ts family.

The protein localises to the cytoplasm. Functionally, associates with the EF-Tu.GDP complex and induces the exchange of GDP to GTP. It remains bound to the aminoacyl-tRNA.EF-Tu.GTP complex up to the GTP hydrolysis stage on the ribosome. This Corynebacterium diphtheriae (strain ATCC 700971 / NCTC 13129 / Biotype gravis) protein is Elongation factor Ts.